The primary structure comprises 200 residues: dITP/XTP pyrophosphatase (200 aa).

Position 8-13 (8-13 (THNPNK)) interacts with substrate. Mg(2+) is bound by residues E41 and D71. D71 (proton acceptor) is an active-site residue. Residues T72, 153–156 (FGYD), K176, and 181–182 (HR) contribute to the substrate site.

Belongs to the HAM1 NTPase family. As to quaternary structure, homodimer. It depends on Mg(2+) as a cofactor.

It carries out the reaction XTP + H2O = XMP + diphosphate + H(+). It catalyses the reaction dITP + H2O = dIMP + diphosphate + H(+). The enzyme catalyses ITP + H2O = IMP + diphosphate + H(+). Pyrophosphatase that catalyzes the hydrolysis of nucleoside triphosphates to their monophosphate derivatives, with a high preference for the non-canonical purine nucleotides XTP (xanthosine triphosphate), dITP (deoxyinosine triphosphate) and ITP. Seems to function as a house-cleaning enzyme that removes non-canonical purine nucleotides from the nucleotide pool, thus preventing their incorporation into DNA/RNA and avoiding chromosomal lesions. This is dITP/XTP pyrophosphatase from Caldanaerobacter subterraneus subsp. tengcongensis (strain DSM 15242 / JCM 11007 / NBRC 100824 / MB4) (Thermoanaerobacter tengcongensis).